Reading from the N-terminus, the 203-residue chain is FMN-dependent NADH:quinone oxidoreductase (203 aa).

FMN contacts are provided by residues serine 9, 15-17 (SVS), and 138-141 (SRGG).

This sequence belongs to the azoreductase type 1 family. Homodimer. It depends on FMN as a cofactor.

It catalyses the reaction 2 a quinone + NADH + H(+) = 2 a 1,4-benzosemiquinone + NAD(+). The enzyme catalyses N,N-dimethyl-1,4-phenylenediamine + anthranilate + 2 NAD(+) = 2-(4-dimethylaminophenyl)diazenylbenzoate + 2 NADH + 2 H(+). Quinone reductase that provides resistance to thiol-specific stress caused by electrophilic quinones. Its function is as follows. Also exhibits azoreductase activity. Catalyzes the reductive cleavage of the azo bond in aromatic azo compounds to the corresponding amines. This is FMN-dependent NADH:quinone oxidoreductase from Methylorubrum populi (strain ATCC BAA-705 / NCIMB 13946 / BJ001) (Methylobacterium populi).